Consider the following 323-residue polypeptide: Germination protease (323 aa).

The propeptide occupies 1-6; sequence MSVRTD.

It belongs to the peptidase A25 family. In terms of assembly, homotetramer. Post-translationally, autoproteolytically processed. The inactive tetrameric zymogen termed p46 autoprocesses to a smaller form termed p41, which is active only during spore germination.

The enzyme catalyses Endopeptidase action with P4 Glu or Asp, P1 preferably Glu &gt; Asp, P1' hydrophobic and P2' Ala.. In terms of biological role, initiates the rapid degradation of small, acid-soluble proteins during spore germination. The sequence is that of Germination protease from Clostridium tetani (strain Massachusetts / E88).